A 59-amino-acid chain; its full sequence is UPF0434 protein VV1_2087 (59 aa).

The protein belongs to the UPF0434 family.

The protein is UPF0434 protein VV1_2087 of Vibrio vulnificus (strain CMCP6).